Consider the following 352-residue polypeptide: Desmethylxanthohumol 6'-O-methyltransferase (352 aa).

An S-adenosyl-L-methionine-binding site is contributed by Asp-219. Residue His-257 is the Proton acceptor of the active site.

This sequence belongs to the class I-like SAM-binding methyltransferase superfamily. Cation-independent O-methyltransferase family. Homodimer. In terms of tissue distribution, highly expressed in lupulin glands. Detected in early-, mid- and late-stage cones.

It is found in the cytoplasm. It carries out the reaction desmethylxanthohumol + S-adenosyl-L-methionine = xanthohumol + S-adenosyl-L-homocysteine + H(+). The enzyme catalyses xanthogalenol + S-adenosyl-L-methionine = 4'-O-methylxanthohumol + S-adenosyl-L-homocysteine + H(+). Its pathway is secondary metabolite biosynthesis. Its activity is regulated as follows. Inhibited by S-adenosyl homocysteine. In terms of biological role, involved in the biosynthesis of prenylated phenolics natural products which contribute to the bitter taste of beer and display broad biological activities. Catalyzes the biosynthesis of xanthohumol. Methylates desmethylxanthohumol and xanthogalenol, but not caffeic acid, prenylflavanones, simple phenols or phenylpropanoids. This Humulus lupulus (European hop) protein is Desmethylxanthohumol 6'-O-methyltransferase.